The primary structure comprises 290 residues: Sodium/potassium-transporting ATPase subunit beta-2 (290 aa).

At 1 to 39 the chain is on the cytoplasmic side; the sequence is MVIQKEKKSCGQVVEEWKEFVWNPRTHQFMGRTGTSWAF. The chain crosses the membrane as a helical; Signal-anchor for type II membrane protein span at residues 40–67; that stretch reads ILLFYLVFYGFLTAMFTLTMWVMLQTVS. The Extracellular portion of the chain corresponds to 68–290; sequence EHTPKYQDRL…VAFKLRINKT (223 aa). N-linked (GlcNAc...) asparagine glycans are attached at residues N96 and N118. Cysteines 129 and 150 form a disulfide. N-linked (GlcNAc...) asparagine glycosylation is found at N153 and N159. The cysteines at positions 160 and 177 are disulfide-linked. Residues N193, N197, and N238 are each glycosylated (N-linked (GlcNAc...) asparagine). The interval 193-290 is immunoglobulin-like; the sequence is NQSMNVTCAG…VAFKLRINKT (98 aa). C200 and C261 form a disulfide bridge.

This sequence belongs to the X(+)/potassium ATPases subunit beta family. In terms of assembly, the sodium/potassium-transporting ATPase is composed of a catalytic alpha subunit, an auxiliary non-catalytic beta subunit and an additional regulatory subunit. Interacts with BSG.

The protein resides in the cell membrane. This is the non-catalytic component of the active enzyme, which catalyzes the hydrolysis of ATP coupled with the exchange of Na(+) and K(+) ions across the plasma membrane. The exact function of the beta-2 subunit is not known. Its function is as follows. Mediates cell adhesion of neurons and astrocytes, and promotes neurite outgrowth. This is Sodium/potassium-transporting ATPase subunit beta-2 (ATP1B2) from Oryctolagus cuniculus (Rabbit).